The primary structure comprises 154 residues: Endoribonuclease YbeY (154 aa).

Residues histidine 120, histidine 124, and histidine 130 each contribute to the Zn(2+) site.

This sequence belongs to the endoribonuclease YbeY family. Requires Zn(2+) as cofactor.

It localises to the cytoplasm. Functionally, single strand-specific metallo-endoribonuclease involved in late-stage 70S ribosome quality control and in maturation of the 3' terminus of the 16S rRNA. The polypeptide is Endoribonuclease YbeY (Leptospira biflexa serovar Patoc (strain Patoc 1 / Ames)).